Reading from the N-terminus, the 516-residue chain is Endo-acting ulvan lyase (516 aa).

A signal peptide spans 1–24; sequence MLEKTTLKNIILIHFLMFLAVVTA. Cys38 and Cys65 are disulfide-bonded. Ca(2+) contacts are provided by Gly42, Asn44, Asp62, Ser64, Ala67, and Asn68. Residue Tyr138 coordinates substrate. Lys143 serves as the catalytic Proton acceptor. Residues 191-195 and 260-263 contribute to the substrate site; these read EGDGR and YRVK. Tyr260 functions as the Proton donor/acceptor in the catalytic mechanism. The ulvan-binding domain stretch occupies residues 289 to 429; that stretch reads PIGDVYKLKN…VWKAIAVESL (141 aa). Residues 430-516 constitute a propeptide, removed by the type IX secretion system (T9SS); it reads SVDENAILAS…NKYHKKLIVK (87 aa).

The protein belongs to the polysaccharide lyase 28 family. Requires Ca(2+) as cofactor.

Its subcellular location is the secreted. Its function is as follows. Ulvan lyase involved in ulvan degradation. Ulvan is the main polysaccharide component of the Ulvales (green seaweed) cell wall. It is composed of disaccharide building blocks comprising 3-sulfated rhamnose (Rha3S) linked to D-glucuronic acid (GlcA), L-iduronic acid (IduA), or D-xylose (Xyl). Ulvan lyase catalyzes the endolytic cleavage of the glycosidic bond between Rha3S and the uronic acids GlcA or IduA, producing oligosaccharides that have unsaturated 4-deoxy-L-threo-hex-4-enopyranosiduronic acid (deltaUA) at the non-reducing end. This results eventually in the degradation of the ulvan polysaccharide into deltaUA-Rha3S disaccharides and deltaUA-Rha3S-Xyl-Rha3S tetrasaccharides. This is Endo-acting ulvan lyase from Formosa agariphila (strain DSM 15362 / KCTC 12365 / LMG 23005 / KMM 3901 / M-2Alg 35-1).